We begin with the raw amino-acid sequence, 437 residues long: Elongation factor 1-gamma (437 aa).

At Ala-2 the chain carries N-acetylalanine. The GST N-terminal domain maps to 2-87 (AAGTLYTYPE…YVSNEELRGS (86 aa)). One can recognise a GST C-terminal domain in the interval 88 to 216 (TPEAAAQVVQ…VKLCEKMAQF (129 aa)). An N6-acetyllysine mark is found at Lys-147 and Lys-212. Residues 221–254 (FAETQPKKDTPRKEKGSREEKQKPQAERKEEKKA) are compositionally biased toward basic and acidic residues. A disordered region spans residues 221–268 (FAETQPKKDTPRKEKGSREEKQKPQAERKEEKKAAAPAPEEEMDECEQ). Residue Lys-253 forms a Glycyl lysine isopeptide (Lys-Gly) (interchain with G-Cter in SUMO1) linkage. In terms of domain architecture, EF-1-gamma C-terminal spans 276–437 (AKDPFAHLPK…KAFNQGKIFK (162 aa)). Lys-285 participates in a covalent cross-link: Glycyl lysine isopeptide (Lys-Gly) (interchain with G-Cter in SUMO2). Position 401 is an N6-acetyllysine (Lys-401). Residue Lys-434 is modified to N6-acetyllysine; alternate. The residue at position 434 (Lys-434) is an N6-malonyllysine; alternate.

As to quaternary structure, EF-1 is composed of four subunits: alpha, beta, delta, and gamma.

In terms of biological role, probably plays a role in anchoring the complex to other cellular components. The chain is Elongation factor 1-gamma (EEF1G) from Macaca fascicularis (Crab-eating macaque).